An 831-amino-acid chain; its full sequence is Cation/H(+) symporter 13 (831 aa).

The next 12 helical transmembrane spans lie at 50–70, 89–109, 112–132, 147–167, 214–234, 250–270, 282–302, 303–323, 334–354, 364–384, 397–417, and 430–450; these read YALP…RLIF, VVLG…FLPA, KIII…LLGL, ILIG…TIMF, LATH…LAFN, MIIG…VWLT, VVPF…GEAM, GVHA…GPPL, FASN…TNFF, VVMI…GTAA, LCLA…TIVW, and LVII…VYLY.

This sequence belongs to the monovalent cation:proton antiporter 2 (CPA2) transporter (TC 2.A.37) family. CHX (TC 2.A.37.4) subfamily. Preferentially expressed in pollen before and after germination. Detected in pollen grains within anthers of the flower buds or in pollen on fully open flowers and on the stigma, and in pollen tubes growing in the style. Weakly expressed in roots.

The protein localises to the cell membrane. Functionally, high-affinity potassium transporter that plays a role in K(+) acquisition. May operate as a K(+)/H(+) symporter. This is Cation/H(+) symporter 13 (CHX13) from Arabidopsis thaliana (Mouse-ear cress).